The chain runs to 433 residues: Enolase (433 aa).

Gln167 is a binding site for (2R)-2-phosphoglycerate. The Proton donor role is filled by Glu209. Mg(2+)-binding residues include Asp246, Glu291, and Asp318. Lys343, Arg372, Ser373, and Lys394 together coordinate (2R)-2-phosphoglycerate. Lys343 functions as the Proton acceptor in the catalytic mechanism.

Belongs to the enolase family. As to quaternary structure, component of the RNA degradosome, a multiprotein complex involved in RNA processing and mRNA degradation. Mg(2+) is required as a cofactor.

The protein resides in the cytoplasm. Its subcellular location is the secreted. It is found in the cell surface. The enzyme catalyses (2R)-2-phosphoglycerate = phosphoenolpyruvate + H2O. Its pathway is carbohydrate degradation; glycolysis; pyruvate from D-glyceraldehyde 3-phosphate: step 4/5. In terms of biological role, catalyzes the reversible conversion of 2-phosphoglycerate (2-PG) into phosphoenolpyruvate (PEP). It is essential for the degradation of carbohydrates via glycolysis. The chain is Enolase from Photorhabdus laumondii subsp. laumondii (strain DSM 15139 / CIP 105565 / TT01) (Photorhabdus luminescens subsp. laumondii).